The chain runs to 255 residues: Trypsin alpha-4 (255 aa).

Positions 1–16 (MLKFVVLLCAISCALG) are cleaved as a signal peptide. Residues 17 to 30 (AAVPEGMVPQLDGR) constitute a propeptide, activation peptide. The Peptidase S1 domain occupies 31–253 (IVGGVATTIS…LRTWVVSAAS (223 aa)). Cys-56 and Cys-72 are joined by a disulfide. Active-site charge relay system residues include His-71 and Asp-116. Cystine bridges form between Cys-179/Cys-196 and Cys-205/Cys-229. Ser-209 (charge relay system) is an active-site residue.

Belongs to the peptidase S1 family.

It localises to the secreted. It is found in the extracellular space. The enzyme catalyses Preferential cleavage: Arg-|-Xaa, Lys-|-Xaa.. The chain is Trypsin alpha-4 from Lucilia cuprina (Green bottle fly).